An 84-amino-acid chain; its full sequence is U8-theraphotoxin-Hhn1c 2 (84 aa).

A signal peptide spans 1–21 (MKVVLLVCLVWMMAMMELVSC). Disulfide bonds link Cys23-Cys35, Cys29-Cys44, Cys34-Cys67, Cys54-Cys75, and Cys69-Cys81.

Belongs to the AVIT (prokineticin) family. As to expression, expressed by the venom gland.

Its subcellular location is the secreted. This is U8-theraphotoxin-Hhn1c 2 from Cyriopagopus hainanus (Chinese bird spider).